We begin with the raw amino-acid sequence, 1052 residues long: Swarming motility protein SwrC (1052 aa).

This sequence belongs to the resistance-nodulation-cell division (RND) (TC 2.A.6) family.

Its function is as follows. Required for self-resistance to surfactin, an antimicrobial lipopeptide surfactant produced by B.subtilis. Also required for swarming motility. This is Swarming motility protein SwrC (swrC) from Bacillus subtilis (strain 168).